A 433-amino-acid polypeptide reads, in one-letter code: sn-glycerol-3-phosphate-binding periplasmic protein UgpB (433 aa).

The N-terminal stretch at 1 to 25 is a signal peptide; sequence MFTRLITTSALTGAIALTIGSQAFA. 7 residues coordinate sn-glycerol 3-phosphate: Y67, D91, S146, S273, G307, Y346, and R397.

The protein belongs to the bacterial solute-binding protein 1 family. As to quaternary structure, the complex is composed of two ATP-binding proteins (UgpC), two transmembrane proteins (UgpA and UgpE) and a solute-binding protein (UgpB).

It localises to the periplasm. In terms of biological role, part of the ABC transporter complex UgpBAEC involved in sn-glycerol-3-phosphate (G3P) import. Binds G3P. The polypeptide is sn-glycerol-3-phosphate-binding periplasmic protein UgpB (ugpB) (Brucella suis biovar 1 (strain 1330)).